The following is a 235-amino-acid chain: Class A basic helix-loop-helix protein 9 (235 aa).

2 disordered regions span residues 1–69 (MLRG…RRMA) and 132–235 (GHLE…HPRS). The span at 55–67 (RRRARPVRSKARR) shows a compositional bias: basic residues. In terms of domain architecture, bHLH spans 65-117 (ARRMAANVRERKRILDYNEAFNALRRALRHDLGGKRLSKIATLRRAIHRIAAL).

Heterodimer. Efficient DNA binding requires dimerization with another bHLH protein. Interacts with TCF3, TCF4, and TCF12.

The protein resides in the nucleus. The protein localises to the cytoplasm. Functionally, transcription factor, which play a role in limb development. Is an essential player in the regulatory network governing transcription of genes implicated in limb morphogenesis. In Homo sapiens (Human), this protein is Class A basic helix-loop-helix protein 9 (BHLHA9).